An 85-amino-acid chain; its full sequence is UPF0181 protein YPO1774/y2534/YP_1619 (85 aa).

The tract at residues 50-85 (QAMAIFEDHDFDEHTESDYRRDDEPDADDIEDPYEG) is disordered. A compositionally biased stretch (basic and acidic residues) spans 55 to 72 (FEDHDFDEHTESDYRRDD). Residues 73 to 85 (EPDADDIEDPYEG) are compositionally biased toward acidic residues.

Belongs to the UPF0181 family.

The chain is UPF0181 protein YPO1774/y2534/YP_1619 from Yersinia pestis.